A 141-amino-acid chain; its full sequence is Glutamyl-tRNA(Gln) amidotransferase subunit C, chloroplastic/mitochondrial (141 aa).

The protein belongs to the GatC family. In terms of assembly, subunit of the heterotrimeric GatCAB amidotransferase (AdT) complex, composed of A, B and C subunits.

It is found in the mitochondrion. The protein localises to the plastid. The protein resides in the chloroplast. The enzyme catalyses L-glutamyl-tRNA(Gln) + L-glutamine + ATP + H2O = L-glutaminyl-tRNA(Gln) + L-glutamate + ADP + phosphate + H(+). Its function is as follows. Allows the formation of correctly charged Gln-tRNA(Gln) through the transamidation of misacylated Glu-tRNA(Gln) in chloroplasts and mitochondria. The reaction takes place in the presence of glutamine and ATP through an activated gamma-phospho-Glu-tRNA(Gln). The chain is Glutamyl-tRNA(Gln) amidotransferase subunit C, chloroplastic/mitochondrial from Populus trichocarpa (Western balsam poplar).